An 87-amino-acid polypeptide reads, in one-letter code: MQIVQGFPADAPLCALMWTCSFLLPGLQTETPYPCTSLCLSSSQSAHPPLPVRVFSAESGYGIPFCAEPCSHVTVCHLQAGPVCMPV.

In Pan troglodytes (Chimpanzee), this protein is Down syndrome critical region protein 10 (DSCR10).